We begin with the raw amino-acid sequence, 127 residues long: Large ribosomal subunit protein bL17 (127 aa).

Belongs to the bacterial ribosomal protein bL17 family. Part of the 50S ribosomal subunit. Contacts protein L32.

In Lactiplantibacillus plantarum (strain ATCC BAA-793 / NCIMB 8826 / WCFS1) (Lactobacillus plantarum), this protein is Large ribosomal subunit protein bL17.